The sequence spans 51 residues: Sperm protamine P1 (51 aa).

Intrachain disulfides connect Cys-7-Cys-15 and Cys-38-Cys-48.

The protein belongs to the protamine P1 family. In terms of assembly, cross-linked by interchain disulfide bonds around the DNA-helix. Phosphorylated by SRPK1. As to expression, testis.

The protein localises to the nucleus. Its subcellular location is the chromosome. In terms of biological role, protamines substitute for histones in the chromatin of sperm during the haploid phase of spermatogenesis. They compact sperm DNA into a highly condensed, stable and inactive complex. This chain is Sperm protamine P1 (Prm1), found in Mus musculus (Mouse).